Reading from the N-terminus, the 141-residue chain is Large ribosomal subunit protein uL11 (141 aa).

Belongs to the universal ribosomal protein uL11 family. As to quaternary structure, part of the ribosomal stalk of the 50S ribosomal subunit. Interacts with L10 and the large rRNA to form the base of the stalk. L10 forms an elongated spine to which L12 dimers bind in a sequential fashion forming a multimeric L10(L12)X complex. Post-translationally, one or more lysine residues are methylated.

Functionally, forms part of the ribosomal stalk which helps the ribosome interact with GTP-bound translation factors. The sequence is that of Large ribosomal subunit protein uL11 from Prosthecochloris aestuarii (strain DSM 271 / SK 413).